A 1004-amino-acid polypeptide reads, in one-letter code: UPF0182 protein Mflv_4654 (1004 aa).

The next 7 helical transmembrane spans lie at F18 to D38, L63 to L83, L114 to Y134, F176 to I196, I211 to D231, K260 to L280, and I288 to V308. The span at P896–G940 shows a compositional bias: low complexity. Residues P896–K960 form a disordered region.

This sequence belongs to the UPF0182 family.

The protein localises to the cell membrane. In Mycolicibacterium gilvum (strain PYR-GCK) (Mycobacterium gilvum (strain PYR-GCK)), this protein is UPF0182 protein Mflv_4654.